The primary structure comprises 417 residues: Signal recognition particle receptor FtsY (417 aa).

Residues 228–235, 310–314, and 368–371 contribute to the GTP site; these read GINGTGKT, DTAGR, and TKID.

It belongs to the GTP-binding SRP family. FtsY subfamily. Part of the signal recognition particle protein translocation system, which is composed of SRP and FtsY.

The protein localises to the cell membrane. It localises to the cytoplasm. It carries out the reaction GTP + H2O = GDP + phosphate + H(+). In terms of biological role, involved in targeting and insertion of nascent membrane proteins into the cytoplasmic membrane. Acts as a receptor for the complex formed by the signal recognition particle (SRP) and the ribosome-nascent chain (RNC). This Methanosarcina acetivorans (strain ATCC 35395 / DSM 2834 / JCM 12185 / C2A) protein is Signal recognition particle receptor FtsY.